A 211-amino-acid polypeptide reads, in one-letter code: Cytochrome c biogenesis ATP-binding export protein CcmA (211 aa).

Positions 1–211 (MAIHNLACVR…RMAEATSCFG (211 aa)) constitute an ABC transporter domain. 33-40 (GSNGAGKT) serves as a coordination point for ATP.

Belongs to the ABC transporter superfamily. CcmA exporter (TC 3.A.1.107) family. The complex is composed of two ATP-binding proteins (CcmA) and two transmembrane proteins (CcmB).

It is found in the cell inner membrane. The enzyme catalyses heme b(in) + ATP + H2O = heme b(out) + ADP + phosphate + H(+). Its function is as follows. Part of the ABC transporter complex CcmAB involved in the biogenesis of c-type cytochromes; once thought to export heme, this seems not to be the case, but its exact role is uncertain. Responsible for energy coupling to the transport system. The polypeptide is Cytochrome c biogenesis ATP-binding export protein CcmA (Sodalis glossinidius (strain morsitans)).